A 269-amino-acid polypeptide reads, in one-letter code: Formamidopyrimidine-DNA glycosylase (269 aa).

Proline 2 serves as the catalytic Schiff-base intermediate with DNA. Glutamate 3 serves as the catalytic Proton donor. The active-site Proton donor; for beta-elimination activity is the lysine 57. The DNA site is built by histidine 90, arginine 109, and lysine 150. The segment at 235–269 adopts an FPG-type zinc-finger fold; the sequence is QVYGRKGEPCRVCGTPIVATKHAQRATFYCRQCQK. Arginine 259 (proton donor; for delta-elimination activity) is an active-site residue.

Belongs to the FPG family. As to quaternary structure, monomer. Requires Zn(2+) as cofactor.

The enzyme catalyses Hydrolysis of DNA containing ring-opened 7-methylguanine residues, releasing 2,6-diamino-4-hydroxy-5-(N-methyl)formamidopyrimidine.. The catalysed reaction is 2'-deoxyribonucleotide-(2'-deoxyribose 5'-phosphate)-2'-deoxyribonucleotide-DNA = a 3'-end 2'-deoxyribonucleotide-(2,3-dehydro-2,3-deoxyribose 5'-phosphate)-DNA + a 5'-end 5'-phospho-2'-deoxyribonucleoside-DNA + H(+). Involved in base excision repair of DNA damaged by oxidation or by mutagenic agents. Acts as a DNA glycosylase that recognizes and removes damaged bases. Has a preference for oxidized purines, such as 7,8-dihydro-8-oxoguanine (8-oxoG). Has AP (apurinic/apyrimidinic) lyase activity and introduces nicks in the DNA strand. Cleaves the DNA backbone by beta-delta elimination to generate a single-strand break at the site of the removed base with both 3'- and 5'-phosphates. This Escherichia coli O6:K15:H31 (strain 536 / UPEC) protein is Formamidopyrimidine-DNA glycosylase.